The following is a 95-amino-acid chain: Small ribosomal subunit protein bS6 (95 aa).

Belongs to the bacterial ribosomal protein bS6 family.

Its function is as follows. Binds together with bS18 to 16S ribosomal RNA. This Oceanobacillus iheyensis (strain DSM 14371 / CIP 107618 / JCM 11309 / KCTC 3954 / HTE831) protein is Small ribosomal subunit protein bS6.